Consider the following 406-residue polypeptide: Tyrosine--tRNA ligase (406 aa).

Y35 serves as a coordination point for L-tyrosine. The short motif at 40–49 (PTADSLHIGH) is the 'HIGH' region element. The L-tyrosine site is built by Y168 and Q172. Residues 228–232 (KMGKT) carry the 'KMSKS' region motif. K231 lines the ATP pocket. The 67-residue stretch at 340–406 (CSVVELLVDI…KKNYNRIIIK (67 aa)) folds into the S4 RNA-binding domain.

Belongs to the class-I aminoacyl-tRNA synthetase family. TyrS type 1 subfamily. As to quaternary structure, homodimer.

The protein resides in the cytoplasm. The catalysed reaction is tRNA(Tyr) + L-tyrosine + ATP = L-tyrosyl-tRNA(Tyr) + AMP + diphosphate + H(+). In terms of biological role, catalyzes the attachment of tyrosine to tRNA(Tyr) in a two-step reaction: tyrosine is first activated by ATP to form Tyr-AMP and then transferred to the acceptor end of tRNA(Tyr). In Clostridium kluyveri (strain NBRC 12016), this protein is Tyrosine--tRNA ligase.